The primary structure comprises 225 residues: Probable methylthioribulose-1-phosphate dehydratase (225 aa).

Residue Cys86 participates in substrate binding. His104 and His106 together coordinate Zn(2+). Glu127 serves as the catalytic Proton donor/acceptor. His183 serves as a coordination point for Zn(2+).

The protein belongs to the aldolase class II family. MtnB subfamily. It depends on Zn(2+) as a cofactor.

It is found in the cytoplasm. The enzyme catalyses 5-(methylsulfanyl)-D-ribulose 1-phosphate = 5-methylsulfanyl-2,3-dioxopentyl phosphate + H2O. Its pathway is amino-acid biosynthesis; L-methionine biosynthesis via salvage pathway; L-methionine from S-methyl-5-thio-alpha-D-ribose 1-phosphate: step 2/6. Catalyzes the dehydration of methylthioribulose-1-phosphate (MTRu-1-P) into 2,3-diketo-5-methylthiopentyl-1-phosphate (DK-MTP-1-P). The sequence is that of Probable methylthioribulose-1-phosphate dehydratase from Leishmania braziliensis.